Consider the following 539-residue polypeptide: Chaperonin GroEL (539 aa).

ATP is bound by residues 29–32, 86–90, Gly413, and Asp492; these read TLGP and DGTTT.

This sequence belongs to the chaperonin (HSP60) family. As to quaternary structure, forms a cylinder of 14 subunits composed of two heptameric rings stacked back-to-back. Interacts with the co-chaperonin GroES.

The protein localises to the cytoplasm. The enzyme catalyses ATP + H2O + a folded polypeptide = ADP + phosphate + an unfolded polypeptide.. Its function is as follows. Together with its co-chaperonin GroES, plays an essential role in assisting protein folding. The GroEL-GroES system forms a nano-cage that allows encapsulation of the non-native substrate proteins and provides a physical environment optimized to promote and accelerate protein folding. This Fusobacterium nucleatum subsp. polymorphum (Fusobacterium polymorphum) protein is Chaperonin GroEL.